We begin with the raw amino-acid sequence, 616 residues long: Chaperone protein HscA (616 aa).

This sequence belongs to the heat shock protein 70 family.

Its function is as follows. Chaperone involved in the maturation of iron-sulfur cluster-containing proteins. Has a low intrinsic ATPase activity which is markedly stimulated by HscB. Involved in the maturation of IscU. The protein is Chaperone protein HscA of Salmonella newport (strain SL254).